Consider the following 248-residue polypeptide: Trypsin I-P1 (248 aa).

The N-terminal stretch at 1–15 is a signal peptide; that stretch reads MKFLVLVAFVGVTVA. A propeptide spans 16–25 (activation peptide); it reads FPISDEDDDK. The region spanning 26 to 246 is the Peptidase S1 domain; the sequence is IVGGYSCARS…YVSWIKTTMS (221 aa). 6 cysteine pairs are disulfide-bonded: Cys-32/Cys-162, Cys-50/Cys-66, Cys-134/Cys-235, Cys-141/Cys-208, Cys-173/Cys-187, and Cys-198/Cys-222. The active-site Charge relay system is His-65. The Ca(2+) site is built by Glu-77, Asn-79, and Glu-87. The Charge relay system role is filled by Asp-109. Ser-202 (charge relay system) is an active-site residue.

The protein belongs to the peptidase S1 family. Requires Ca(2+) as cofactor. As to expression, high levels are seen in the pancreas while lower levels are found in the liver, spleen and thymus.

It localises to the secreted. The protein resides in the extracellular space. It catalyses the reaction Preferential cleavage: Arg-|-Xaa, Lys-|-Xaa.. This is Trypsin I-P1 from Gallus gallus (Chicken).